A 765-amino-acid chain; its full sequence is Putative U-box domain-containing protein 50 (765 aa).

Positions 198 to 391 form a coiled coil; sequence QEIENYFQQL…NRRIEFCKER (194 aa). One can recognise a Protein kinase domain in the interval 422-765; that stretch reads SDRLRLKSGG…HSKRAAQASS (344 aa). Residues 428-436 and Lys-449 contribute to the ATP site; that span reads KSGGNWTNV. The U-box domain occupies 688–762; it reads DIPSVFMCPI…QDWHSKRAAQ (75 aa).

Belongs to the protein kinase superfamily. Ser/Thr protein kinase family.

The catalysed reaction is S-ubiquitinyl-[E2 ubiquitin-conjugating enzyme]-L-cysteine + [acceptor protein]-L-lysine = [E2 ubiquitin-conjugating enzyme]-L-cysteine + N(6)-ubiquitinyl-[acceptor protein]-L-lysine.. It functions in the pathway protein modification; protein ubiquitination. Functionally, functions as an E3 ubiquitin ligase. In Arabidopsis thaliana (Mouse-ear cress), this protein is Putative U-box domain-containing protein 50 (PUB50).